We begin with the raw amino-acid sequence, 331 residues long: Peroxisomal nicotinamide adenine dinucleotide carrier (331 aa).

3 Solcar repeats span residues 2-91 (SDAL…FRNR), 109-216 (VGMF…MLTK), and 229-320 (VTAL…LVKG). The next 6 membrane-spanning stretches (helical) occupy residues 5–25 (LING…TYPL), 63–85 (LYGG…YYFY), 116–136 (LVAA…WVIV), 180–200 (VYDE…LIMV), 235–255 (FLLG…LLVV), and 293–313 (YKGM…LFMI).

Belongs to the mitochondrial carrier (TC 2.A.29) family. Homodimer. In terms of tissue distribution, expressed in cotyledons, hypocotyls, vascular tissues, trichomes, hydathodes, seeds, pedicels, flowers and stigma.

The protein resides in the glyoxysome membrane. Its activity is regulated as follows. Inhibited by pyridoxal 5'-phosphate, bathophenanthroline, tannic acid, mersalyl, mercuric chloride and bromocresol purple. Mediates the NAD(+) import into peroxisomes. Favors the NAD(+)(in)/AMP(out) antiport exchange, but is also able to catalyze a low unidirectional transport that might be essential under special conditions. Transports CoA, dephospho-CoA, acetyl-CoA, adenosine 3',5'-diphosphate (PAP), NAD(+), AMP, ADP and NADH, but has no activity with ATP, GTP, GDP, NADPH, NADP(+) or FAD. Required for peroxisomes proliferation. The sequence is that of Peroxisomal nicotinamide adenine dinucleotide carrier (PXN) from Arabidopsis thaliana (Mouse-ear cress).